The sequence spans 313 residues: Methionyl-tRNA formyltransferase (313 aa).

A disordered region spans residues 32-51 (QPDRRKGRGKELQPPPAKRK). Residue 109 to 112 (SLLP) participates in (6S)-5,6,7,8-tetrahydrofolate binding.

The protein belongs to the Fmt family.

It carries out the reaction L-methionyl-tRNA(fMet) + (6R)-10-formyltetrahydrofolate = N-formyl-L-methionyl-tRNA(fMet) + (6S)-5,6,7,8-tetrahydrofolate + H(+). Its function is as follows. Attaches a formyl group to the free amino group of methionyl-tRNA(fMet). The formyl group appears to play a dual role in the initiator identity of N-formylmethionyl-tRNA by promoting its recognition by IF2 and preventing the misappropriation of this tRNA by the elongation apparatus. This Natranaerobius thermophilus (strain ATCC BAA-1301 / DSM 18059 / JW/NM-WN-LF) protein is Methionyl-tRNA formyltransferase.